A 26-amino-acid polypeptide reads, in one-letter code: Thrombopoietin (26 aa).

The protein belongs to the EPO/TPO family.

The protein localises to the secreted. Its function is as follows. Lineage-specific cytokine affecting the proliferation and maturation of megakaryocytes from their committed progenitor cells. It acts at a late stage of megakaryocyte development. It may be the major physiological regulator of circulating platelets. The sequence is that of Thrombopoietin (THPO) from Sus scrofa (Pig).